Here is a 611-residue protein sequence, read N- to C-terminus: Phosphomethylpyrimidine synthase (611 aa).

Residues Asn-212, Met-241, Tyr-270, His-306, 326-328, 367-370, and Glu-406 each bind substrate; these read SRG and DGLR. Zn(2+) is bound at residue His-410. A substrate-binding site is contributed by Tyr-433. His-474 contributes to the Zn(2+) binding site. Positions 554, 557, and 562 each coordinate [4Fe-4S] cluster.

Belongs to the ThiC family. As to quaternary structure, homodimer. It depends on [4Fe-4S] cluster as a cofactor.

It catalyses the reaction 5-amino-1-(5-phospho-beta-D-ribosyl)imidazole + S-adenosyl-L-methionine = 4-amino-2-methyl-5-(phosphooxymethyl)pyrimidine + CO + 5'-deoxyadenosine + formate + L-methionine + 3 H(+). The protein operates within cofactor biosynthesis; thiamine diphosphate biosynthesis. In terms of biological role, catalyzes the synthesis of the hydroxymethylpyrimidine phosphate (HMP-P) moiety of thiamine from aminoimidazole ribotide (AIR) in a radical S-adenosyl-L-methionine (SAM)-dependent reaction. The polypeptide is Phosphomethylpyrimidine synthase (Bartonella bacilliformis (strain ATCC 35685 / KC583 / Herrer 020/F12,63)).